The sequence spans 365 residues: 3-isopropylmalate dehydrogenase (365 aa).

80–91 (GPKWGTGSVRPE) contacts NAD(+). Substrate contacts are provided by Arg-98, Arg-108, Arg-137, and Asp-226. Asp-226, Asp-251, and Asp-255 together coordinate Mg(2+). 290–301 (GSAPDLPKGKVN) provides a ligand contact to NAD(+).

Belongs to the isocitrate and isopropylmalate dehydrogenases family. Homodimer. Mg(2+) serves as cofactor. The cofactor is Mn(2+).

It localises to the cytoplasm. The catalysed reaction is (2R,3S)-3-isopropylmalate + NAD(+) = 4-methyl-2-oxopentanoate + CO2 + NADH. It functions in the pathway amino-acid biosynthesis; L-leucine biosynthesis; L-leucine from 3-methyl-2-oxobutanoate: step 3/4. Functionally, catalyzes the oxidation of 3-carboxy-2-hydroxy-4-methylpentanoate (3-isopropylmalate) to 3-carboxy-4-methyl-2-oxopentanoate. The product decarboxylates to 4-methyl-2 oxopentanoate. The chain is 3-isopropylmalate dehydrogenase (LEU2) from Maudiozyma exigua (Yeast).